We begin with the raw amino-acid sequence, 241 residues long: Small ribosomal subunit protein uS3 (241 aa).

In terms of domain architecture, KH type-2 spans 39 to 107; the sequence is IRKYLEKELK…ETHLNIVEVR (69 aa). Positions 214–241 are disordered; it reads ASERRATEGDAAHGGGGDRERGRRRENA.

Belongs to the universal ribosomal protein uS3 family. In terms of assembly, part of the 30S ribosomal subunit. Forms a tight complex with proteins S10 and S14.

Its function is as follows. Binds the lower part of the 30S subunit head. Binds mRNA in the 70S ribosome, positioning it for translation. The protein is Small ribosomal subunit protein uS3 of Mesorhizobium japonicum (strain LMG 29417 / CECT 9101 / MAFF 303099) (Mesorhizobium loti (strain MAFF 303099)).